Here is a 138-residue protein sequence, read N- to C-terminus: ATP synthase epsilon chain (138 aa).

It belongs to the ATPase epsilon chain family. In terms of assembly, F-type ATPases have 2 components, CF(1) - the catalytic core - and CF(0) - the membrane proton channel. CF(1) has five subunits: alpha(3), beta(3), gamma(1), delta(1), epsilon(1). CF(0) has three main subunits: a, b and c.

The protein localises to the cell inner membrane. In terms of biological role, produces ATP from ADP in the presence of a proton gradient across the membrane. The protein is ATP synthase epsilon chain of Methylibium petroleiphilum (strain ATCC BAA-1232 / LMG 22953 / PM1).